A 91-amino-acid chain; its full sequence is Small ribosomal subunit protein uS19 (91 aa).

It belongs to the universal ribosomal protein uS19 family.

In terms of biological role, protein S19 forms a complex with S13 that binds strongly to the 16S ribosomal RNA. The polypeptide is Small ribosomal subunit protein uS19 (Colwellia psychrerythraea (strain 34H / ATCC BAA-681) (Vibrio psychroerythus)).